Consider the following 498-residue polypeptide: ATP synthase subunit beta, chloroplastic (498 aa).

An ATP-binding site is contributed by 172 to 179 (GGAGVGKT).

This sequence belongs to the ATPase alpha/beta chains family. As to quaternary structure, F-type ATPases have 2 components, CF(1) - the catalytic core - and CF(0) - the membrane proton channel. CF(1) has five subunits: alpha(3), beta(3), gamma(1), delta(1), epsilon(1). CF(0) has four main subunits: a(1), b(1), b'(1) and c(9-12).

The protein resides in the plastid. It is found in the chloroplast thylakoid membrane. The enzyme catalyses ATP + H2O + 4 H(+)(in) = ADP + phosphate + 5 H(+)(out). Functionally, produces ATP from ADP in the presence of a proton gradient across the membrane. The catalytic sites are hosted primarily by the beta subunits. The sequence is that of ATP synthase subunit beta, chloroplastic from Pelargonium hortorum (Common geranium).